Here is a 399-residue protein sequence, read N- to C-terminus: Aspartate aminotransferase (399 aa).

G42 and N179 together coordinate L-aspartate. K240 carries the N6-(pyridoxal phosphate)lysine modification. Position 372 (R372) interacts with L-aspartate.

Belongs to the class-I pyridoxal-phosphate-dependent aminotransferase family. Homodimer. Requires pyridoxal 5'-phosphate as cofactor.

It is found in the cytoplasm. It catalyses the reaction L-aspartate + 2-oxoglutarate = oxaloacetate + L-glutamate. The polypeptide is Aspartate aminotransferase (aspC) (Sulfurisphaera tokodaii (strain DSM 16993 / JCM 10545 / NBRC 100140 / 7) (Sulfolobus tokodaii)).